The following is a 135-amino-acid chain: Transcriptional activator protein (135 aa).

Positions 17–32 (KVTHRQVKKRAIRRRR) match the Nuclear localization signal motif. A zinc finger lies at 37-54 (CGCSYYLHINCFNHGFTH). Positions 77–88 (VFHNHQAPTTTI) are enriched in polar residues. The segment at 77 to 117 (VFHNHQAPTTTIPAEPGHHNSPGSIQSQPEEGAGDSQMFSQ) is disordered. The interval 120–135 (DLDNLTASDWSFLKGL) is transactivation.

It belongs to the geminiviridae transcriptional activator protein family. Monomer. Homodimer. Homooligomer. Self-interaction correlates with nuclear localization and efficient activation of transcription. Monomers suppress local silencing by interacting with and inactivating host adenosine kinase 2 (ADK2) in the cytoplasm. Interacts with and inhibits host SNF1 kinase. Binds to ssDNA. Post-translationally, phosphorylated.

Its subcellular location is the host nucleus. The protein localises to the host cytoplasm. Functionally, strong activator of the late viral genes promoters. Enhances the expression of the capsid protein and nuclear shuttle protein. Acts as a suppressor of RNA-mediated gene silencing, also known as post-transcriptional gene silencing (PTGS), a mechanism of plant viral defense that limits the accumulation of viral RNAs. Suppresses the host RNA silencing by inhibiting adenosine kinase 2 (ADK2), a kinase involved in a general methylation pathway. Also suppresses the host basal defense by interacting with and inhibiting SNF1 kinase, a key regulator of cell metabolism implicated in innate antiviral defense. Determines pathogenicity. The sequence is that of Transcriptional activator protein from Hewittia sublobata (Coralbush).